Consider the following 634-residue polypeptide: Probable potassium transport system protein Kup (634 aa).

12 consecutive transmembrane segments (helical) span residues 19-39 (AIGL…TSPL), 62-82 (VLSL…VIFV), 113-133 (FVVV…MITP), 150-170 (GLEH…FLIQ), 177-197 (IGIL…ALGV), 225-245 (IGVA…ALYA), 259-279 (WFLL…ATIL), 291-311 (LLAP…ATVI), 349-369 (IYIG…VLGF), 379-399 (YGVA…VVIW), 406-426 (LWLG…FFAA), and 431-451 (VIQG…LMST).

The protein belongs to the HAK/KUP transporter (TC 2.A.72) family.

The protein resides in the cell inner membrane. The enzyme catalyses K(+)(in) + H(+)(in) = K(+)(out) + H(+)(out). In terms of biological role, transport of potassium into the cell. Likely operates as a K(+):H(+) symporter. The chain is Probable potassium transport system protein Kup from Pseudomonas aeruginosa (strain UCBPP-PA14).